Consider the following 197-residue polypeptide: uncharacterized protein (197 aa).

A signal peptide spans 1–30 (MSTYIIINIALLIAIVALIFFLSKKTKSEA).

This is an uncharacterized protein from Acanthamoeba polyphaga (Amoeba).